Reading from the N-terminus, the 294-residue chain is Protein CHLOROPLAST J-LIKE DOMAIN 1, chloroplastic (294 aa).

A chloroplast-targeting transit peptide spans Met-1 to Arg-58. At Ala-59–Asn-164 the chain is on the stromal side. A J-like domain region spans residues Asn-74–Ile-152. A helical membrane pass occupies residues Asp-165 to Ile-182. At Lys-183–Arg-233 the chain is on the chloroplast intermembrane side. A helical membrane pass occupies residues Leu-234–Leu-256. Over Asn-257 to Glu-275 the chain is Stromal. The helical transmembrane segment at Leu-276–Tyr-293 threads the bilayer. A topological domain (chloroplast intermembrane) is located at residue Arg-294.

As to quaternary structure, interacts (via J-like domain) with ARC6 (via J domain).

Its subcellular location is the plastid. The protein localises to the chloroplast inner membrane. Its function is as follows. Probably involved in the regulation of the fatty acid metabolic process in chloroplasts, especially chloroplastic galactolipids monogalactosyldiacylglycerol (MGDG) and digalactosyldiacylglycerol (DGDG). This Arabidopsis thaliana (Mouse-ear cress) protein is Protein CHLOROPLAST J-LIKE DOMAIN 1, chloroplastic.